A 122-amino-acid polypeptide reads, in one-letter code: Prefoldin subunit 1 (122 aa).

Belongs to the prefoldin subunit beta family. In terms of assembly, heterohexamer of two PFD-alpha type and four PFD-beta type subunits.

In terms of biological role, binds specifically to cytosolic chaperonin (c-CPN) and transfers target proteins to it. Binds to nascent polypeptide chain and promotes folding in an environment in which there are many competing pathways for nonnative proteins. The protein is Prefoldin subunit 1 (pfdn1) of Danio rerio (Zebrafish).